We begin with the raw amino-acid sequence, 455 residues long: Phosphoglucosamine mutase (455 aa).

Ser107 serves as the catalytic Phosphoserine intermediate. 4 residues coordinate Mg(2+): Ser107, Asp247, Asp249, and Asp251. Residue Ser107 is modified to Phosphoserine.

It belongs to the phosphohexose mutase family. It depends on Mg(2+) as a cofactor. Activated by phosphorylation.

It carries out the reaction alpha-D-glucosamine 1-phosphate = D-glucosamine 6-phosphate. In terms of biological role, catalyzes the conversion of glucosamine-6-phosphate to glucosamine-1-phosphate. This is Phosphoglucosamine mutase from Leuconostoc citreum (strain KM20).